The primary structure comprises 364 residues: Paraneoplastic antigen Ma2 (364 aa).

The residue at position 2 (A2) is an N-acetylalanine. Acidic residues predominate over residues 335 to 351 (EEEEASFENESIEEPEE). Positions 335 to 364 (EEEEASFENESIEEPEERDGYGRWNHEGDD) are disordered. Over residues 352–364 (RDGYGRWNHEGDD) the composition is skewed to basic and acidic residues.

This sequence belongs to the PNMA family. In terms of tissue distribution, brain-specific. In some cancer patients, specifically expressed by testicular tumor cells.

It is found in the nucleus. The protein resides in the nucleolus. This Homo sapiens (Human) protein is Paraneoplastic antigen Ma2 (PNMA2).